The sequence spans 129 residues: Small ribosomal subunit protein uS11 (129 aa).

Belongs to the universal ribosomal protein uS11 family. Part of the 30S ribosomal subunit. Interacts with proteins S7 and S18. Binds to IF-3.

Located on the platform of the 30S subunit, it bridges several disparate RNA helices of the 16S rRNA. Forms part of the Shine-Dalgarno cleft in the 70S ribosome. The chain is Small ribosomal subunit protein uS11 from Methylocella silvestris (strain DSM 15510 / CIP 108128 / LMG 27833 / NCIMB 13906 / BL2).